Reading from the N-terminus, the 150-residue chain is N-alpha-acetyltransferase 30 (150 aa).

In terms of domain architecture, N-acetyltransferase spans 2 to 150 (VTIVPYSHQY…DAFRYILYPN (149 aa)).

It belongs to the acetyltransferase family. MAK3 subfamily.

Its subcellular location is the cytoplasm. The protein resides in the nucleus. It catalyses the reaction N-terminal L-methionyl-L-leucyl-[protein] + acetyl-CoA = N-terminal N(alpha)-acetyl-L-methionyl-L-leucyl-[protein] + CoA + H(+). It carries out the reaction N-terminal L-methionyl-L-isoleucyl-[protein] + acetyl-CoA = N-terminal N(alpha)-acetyl-L-methionyl-L-isoleucyl-[protein] + CoA + H(+). The catalysed reaction is N-terminal L-methionyl-L-phenylalanyl-[protein] + acetyl-CoA = N-terminal N(alpha)-acetyl-L-methionyl-L-phenylalanyl-[protein] + CoA + H(+). The enzyme catalyses N-terminal L-methionyl-L-tryptophyl-[protein] + acetyl-CoA = N-terminal N(alpha)-acetyl-L-methionyl-L-tryptophyl-[protein] + CoA + H(+). It catalyses the reaction N-terminal L-methionyl-L-tyrosyl-[protein] + acetyl-CoA = N-terminal N(alpha)-acetyl-L-methionyl-L-tyrosyl-[protein] + CoA + H(+). In terms of biological role, catalytic component of the NatC N-terminal acetyltransferase. This is N-alpha-acetyltransferase 30 (naa30) from Schizosaccharomyces pombe (strain 972 / ATCC 24843) (Fission yeast).